The sequence spans 711 residues: Double-stranded RNA-specific editase 1 (711 aa).

A disordered region spans residues 1–78 (MDIEDEENMS…KRRKTPGPVL (78 aa)). The segment covering 63–73 (SKYRLKKRRKT) has biased composition (basic residues). A DRBM 1 domain is found at 78–144 (LPKNALMQLN…AEKALRSFVQ (67 aa)). Interaction with substrate RNA stretches follow at residues 83 to 88 (LMQLNE) and 104 to 105 (VH). S149 bears the Phosphoserine mark. The segment at 176-220 (LFNGFETPDKSEPPFYVGSNGDDSFSSSGDVSLSASPVPASLTQP) is disordered. Residues 192–213 (VGSNGDDSFSSSGDVSLSASPV) are compositionally biased toward low complexity. The DRBM 2 domain maps to 231-298 (PSGKNPVMIL…AQSALATVFN (68 aa)). Interaction with substrate RNA stretches follow at residues 237-242 (VMILNE) and H259. In terms of domain architecture, A to I editase spans 370–707 (SVSTGTKCIN…VEKPTEQDQF (338 aa)). A Zn(2+)-binding site is contributed by H394. E396 (proton donor) is an active-site residue. R400 and R401 together coordinate 1D-myo-inositol hexakisphosphate. Zn(2+)-binding residues include C451 and C526. 1D-myo-inositol hexakisphosphate contacts are provided by K529, R532, K639, K672, K682, and K700.

Homodimer. Homodimerization is essential for its catalytic activity. Can form heterodimers with isoform 5 of ADAR/ADAR1. 1D-myo-inositol hexakisphosphate serves as cofactor.

It is found in the nucleus. The protein resides in the nucleolus. The catalysed reaction is adenosine in double-stranded RNA + H2O + H(+) = inosine in double-stranded RNA + NH4(+). In terms of biological role, catalyzes the hydrolytic deamination of adenosine to inosine in double-stranded RNA (dsRNA) referred to as A-to-I RNA editing. This may affect gene expression and function in a number of ways that include mRNA translation by changing codons and hence the amino acid sequence of proteins; pre-mRNA splicing by altering splice site recognition sequences; RNA stability by changing sequences involved in nuclease recognition; genetic stability in the case of RNA virus genomes by changing sequences during viral RNA replication; and RNA structure-dependent activities such as microRNA production or targeting or protein-RNA interactions. Can edit both viral and cellular RNAs and can edit RNAs at multiple sites (hyper-editing) or at specific sites (site-specific editing). Its cellular RNA substrates include: bladder cancer-associated protein (BLCAP), neurotransmitter receptors for glutamate (GRIA2 and GRIK2) and serotonin (HTR2C), GABA receptor (GABRA3) and potassium voltage-gated channel (KCNA1). Site-specific RNA editing of transcripts encoding these proteins results in amino acid substitutions which consequently alter their functional activities. Edits GRIA2 at both the Q/R and R/G sites efficiently but converts the adenosine in hotspot1 much less efficiently. Can inhibit cell proliferation and migration and can stimulate exocytosis. The polypeptide is Double-stranded RNA-specific editase 1 (Adarb1) (Mus musculus (Mouse)).